Here is a 307-residue protein sequence, read N- to C-terminus: Protein Y (307 aa).

Belongs to the ATP-dependent AMP-binding enzyme family.

It functions in the pathway antibiotic biosynthesis; candicidin biosynthesis. Its function is as follows. May be a p-aminobenzoic acid-CoA ligase that activates PabA to start the biosynthesis of candicidin. The protein is Protein Y of Streptomyces griseus.